The sequence spans 155 residues: MALYAIFRVRGRVDVRKDIEDTLKLLRVHRKNYLSIMPKTESIEGMIQKAKDYITWGEIDEKTLAELLKKRGRISRRKKLTLEYIKEKGFNSFEELAKALIEGKVTLKELGIKPFFRLRPPSKGYGKKGIKKHFNEGGALGYRGEKINDLILRAI.

Belongs to the universal ribosomal protein uL30 family. As to quaternary structure, part of the 50S ribosomal subunit.

In Nanoarchaeum equitans (strain Kin4-M), this protein is Large ribosomal subunit protein uL30.